Here is a 353-residue protein sequence, read N- to C-terminus: Ferrochelatase (353 aa).

The segment covering 1–13 (MTLERTGRDEEKA) has biased composition (basic and acidic residues). Residues 1–23 (MTLERTGRDEEKALTQPPSGHSS) are disordered. Fe cation-binding residues include His-223 and Glu-304.

The protein belongs to the ferrochelatase family.

The protein localises to the cytoplasm. It catalyses the reaction heme b + 2 H(+) = protoporphyrin IX + Fe(2+). Its pathway is porphyrin-containing compound metabolism; protoheme biosynthesis; protoheme from protoporphyrin-IX: step 1/1. Its function is as follows. Catalyzes the ferrous insertion into protoporphyrin IX. In Chelativorans sp. (strain BNC1), this protein is Ferrochelatase.